Here is a 104-residue protein sequence, read N- to C-terminus: Enhancer of rudimentary homolog (104 aa).

An N-acetylserine modification is found at Ser-2. Position 11 is a phosphothreonine (Thr-11). Residue Lys-12 forms a Glycyl lysine isopeptide (Lys-Gly) (interchain with G-Cter in SUMO2) linkage.

Belongs to the E(R) family. Homodimer.

The protein resides in the nucleus. Its function is as follows. May have a role in the cell cycle. The protein is Enhancer of rudimentary homolog (ERH) of Bos taurus (Bovine).